Here is a 131-residue protein sequence, read N- to C-terminus: MNPAYRKAMLESEIQKLLMEALQQLRDPRLKKDFVTFSRVELSKDKRYADVYVSFLGTPEERKETVEILNRAKGFFRTFIAKNLRLYVAPEIRFYEDKGIEASVKVHQLLVQLGYDPLKDKEKKEEDKEEE.

It belongs to the RbfA family. Monomer. Binds 30S ribosomal subunits, but not 50S ribosomal subunits or 70S ribosomes.

It localises to the cytoplasm. Functionally, one of several proteins that assist in the late maturation steps of the functional core of the 30S ribosomal subunit. Associates with free 30S ribosomal subunits (but not with 30S subunits that are part of 70S ribosomes or polysomes). Required for efficient processing of 16S rRNA. May interact with the 5'-terminal helix region of 16S rRNA. The protein is Ribosome-binding factor A of Thermotoga maritima (strain ATCC 43589 / DSM 3109 / JCM 10099 / NBRC 100826 / MSB8).